Here is a 205-residue protein sequence, read N- to C-terminus: Small ribosomal subunit protein uS4 (205 aa).

A compositionally biased stretch (basic residues) spans 1–12 (MSKRIQAKHKLD). Residues 1–49 (MSKRIQAKHKLDRRMGQNIWGRPKSPVNRREYGPGQHGQRRKGKMSDFG) are disordered. Residues 94–155 (RRLDAVVYRA…SSRQLEIVIV (62 aa)) enclose the S4 RNA-binding domain.

Belongs to the universal ribosomal protein uS4 family. In terms of assembly, part of the 30S ribosomal subunit. Contacts protein S5. The interaction surface between S4 and S5 is involved in control of translational fidelity.

Functionally, one of the primary rRNA binding proteins, it binds directly to 16S rRNA where it nucleates assembly of the body of the 30S subunit. With S5 and S12 plays an important role in translational accuracy. The sequence is that of Small ribosomal subunit protein uS4 from Methylobacterium radiotolerans (strain ATCC 27329 / DSM 1819 / JCM 2831 / NBRC 15690 / NCIMB 10815 / 0-1).